The sequence spans 76 residues: Protein krueppel (76 aa).

2 C2H2-type zinc fingers span residues 11-33 (FECS…LRLH) and 39-61 (YSCP…LRVH).

The protein belongs to the krueppel C2H2-type zinc-finger protein family.

The protein localises to the nucleus. Functionally, krueppel is a gap class segmentation protein. The sequence is that of Protein krueppel (Kr) from Manduca sexta (Tobacco hawkmoth).